A 273-amino-acid polypeptide reads, in one-letter code: 6-carboxyhexanoate--CoA ligase (273 aa).

Belongs to the BioW family. Homodimer. It depends on Mg(2+) as a cofactor.

The enzyme catalyses heptanedioate + ATP + CoA = 6-carboxyhexanoyl-CoA + AMP + diphosphate. The protein operates within metabolic intermediate metabolism; pimeloyl-CoA biosynthesis; pimeloyl-CoA from pimelate: step 1/1. In terms of biological role, catalyzes the transformation of pimelate into pimeloyl-CoA with concomitant hydrolysis of ATP to AMP. The protein is 6-carboxyhexanoate--CoA ligase of Alkalihalophilus pseudofirmus (strain ATCC BAA-2126 / JCM 17055 / OF4) (Bacillus pseudofirmus).